The primary structure comprises 135 residues: Fluoride-specific ion channel FluC 1 (135 aa).

A run of 4 helical transmembrane segments spans residues 7–27 (LAVGSFAFFGGILRYLIGLVL), 32–52 (GFPYGTLCVNLIGAFCLPFLM), 65–85 (LALAIGTGFFGAFTTFSSFSV), and 96–116 (WSAFAWYVGISMVGGVLLSLL). Residues G75 and T78 each contribute to the Na(+) site.

It belongs to the fluoride channel Fluc/FEX (TC 1.A.43) family.

It is found in the cell membrane. The enzyme catalyses fluoride(in) = fluoride(out). Its activity is regulated as follows. Na(+) is not transported, but it plays an essential structural role and its presence is essential for fluoride channel function. Fluoride-specific ion channel. Important for reducing fluoride concentration in the cell, thus reducing its toxicity. This Latilactobacillus sakei subsp. sakei (strain 23K) (Lactobacillus sakei subsp. sakei) protein is Fluoride-specific ion channel FluC 1.